Here is a 209-residue protein sequence, read N- to C-terminus: Ion-translocating oxidoreductase complex subunit G (209 aa).

A helical transmembrane segment spans residues G9–L29. Position 175 is an FMN phosphoryl threonine (T175).

The protein belongs to the RnfG family. In terms of assembly, the complex is composed of six subunits: RnfA, RnfB, RnfC, RnfD, RnfE and RnfG. Requires FMN as cofactor.

The protein localises to the cell inner membrane. Part of a membrane-bound complex that couples electron transfer with translocation of ions across the membrane. This chain is Ion-translocating oxidoreductase complex subunit G, found in Vibrio atlanticus (strain LGP32) (Vibrio splendidus (strain Mel32)).